The following is a 284-amino-acid chain: Aldo-keto reductase MAV_3816 (284 aa).

Y59 functions as the Proton donor in the catalytic mechanism. The NADPH site is built by L199, I237, R239, S240, A241, S248, and R275.

This sequence belongs to the aldo/keto reductase family.

This Mycobacterium avium (strain 104) protein is Aldo-keto reductase MAV_3816.